A 290-amino-acid polypeptide reads, in one-letter code: Small ribosomal subunit biogenesis GTPase RsgA (290 aa).

In terms of domain architecture, CP-type G spans 62–213 (KNSLVRPPIV…IADTPGFSSL (152 aa)). GTP contacts are provided by residues 111-114 (SKMD) and 156-164 (GQTGVGKST). Zn(2+) is bound by residues cysteine 237, cysteine 242, histidine 244, and cysteine 250.

Belongs to the TRAFAC class YlqF/YawG GTPase family. RsgA subfamily. As to quaternary structure, monomer. Associates with 30S ribosomal subunit, binds 16S rRNA. Zn(2+) is required as a cofactor.

The protein localises to the cytoplasm. Its function is as follows. One of several proteins that assist in the late maturation steps of the functional core of the 30S ribosomal subunit. Helps release RbfA from mature subunits. May play a role in the assembly of ribosomal proteins into the subunit. Circularly permuted GTPase that catalyzes slow GTP hydrolysis, GTPase activity is stimulated by the 30S ribosomal subunit. The protein is Small ribosomal subunit biogenesis GTPase RsgA of Streptococcus pyogenes serotype M6 (strain ATCC BAA-946 / MGAS10394).